A 370-amino-acid polypeptide reads, in one-letter code: MQNNLVLLILSILSIFEVSAYSNVEKGAAARARCWTSGNGRPAQWWQEGDQVTRGKYFYECRRGQLEPLGCLSSTEEKIPLGHTFQQDRYEFICQLGSDGYIEFGYSACVGTDGRTYQKGETWTDAKNTYYYRCRDDGRVVKTTIEGCIAHDKQRRVPLGQTDDFNGYTYKCQQKTTGVVQMCSVGCIHEGTRYTVGQQYRDGDYLFYCKLQGGKCTKQCIGCVAGGQDLYDGQRYKRDGTTYQCEIRPGKRSHRAVGCSIVENGRDINKVIGCRWYEQNPDWKIEKTCETDGDNKTKVTTVGCIYKYKGFDRIFLEPGKYTIWNLPKQKDSSVGLACRKTADGAELVIFDVAQLERNTSGLKYDLPRGK.

This is an uncharacterized protein from Caenorhabditis elegans.